An 870-amino-acid polypeptide reads, in one-letter code: Eukaryotic translation initiation factor 3 subunit C (870 aa).

The tract at residues 1–92 (MSRFFRGDSS…GVKVVKSAKN (92 aa)) is disordered. Over residues 14 to 54 (SSDEEEDLYSDDEEVQEQPEEESEEDDSEEDDDDDDSDSSS) the composition is skewed to acidic residues. The PCI domain maps to 608–782 (FHMHINLELL…SSIIFRKGVE (175 aa)). Positions 807 to 870 (TLETRTQGTA…ALGAAVGSRA (64 aa)) are disordered. A compositionally biased stretch (gly residues) spans 824–844 (GRGGRGGNRGGRGGNRGGRGG).

Belongs to the eIF-3 subunit C family. As to quaternary structure, component of the eukaryotic translation initiation factor 3 (eIF-3) complex.

It localises to the cytoplasm. Its function is as follows. Component of the eukaryotic translation initiation factor 3 (eIF-3) complex, which is involved in protein synthesis of a specialized repertoire of mRNAs and, together with other initiation factors, stimulates binding of mRNA and methionyl-tRNAi to the 40S ribosome. The eIF-3 complex specifically targets and initiates translation of a subset of mRNAs involved in cell proliferation. This is Eukaryotic translation initiation factor 3 subunit C (nip1) from Sclerotinia sclerotiorum (strain ATCC 18683 / 1980 / Ss-1) (White mold).